A 130-amino-acid chain; its full sequence is MSMQDPIADMLTRIRNGQFASKISVIMPSSKLKVKISILLKEEGYIKDFSVNSTNKPILEIFLKYFRSKPVIENITRVSSPSLRIYARNNKLPQVMSGLGIVIISTSQGVLTDQVARKKGLGGEIICNVS.

The protein belongs to the universal ribosomal protein uS8 family. In terms of assembly, part of the 30S ribosomal subunit. Contacts proteins S5 and S12.

Functionally, one of the primary rRNA binding proteins, it binds directly to 16S rRNA central domain where it helps coordinate assembly of the platform of the 30S subunit. The sequence is that of Small ribosomal subunit protein uS8 from Buchnera aphidicola subsp. Baizongia pistaciae (strain Bp).